Reading from the N-terminus, the 197-residue chain is Peptide deformylase (197 aa).

Fe cation is bound by residues Cys106 and His148. The active site involves Glu149. His152 lines the Fe cation pocket.

Belongs to the polypeptide deformylase family. Fe(2+) serves as cofactor.

The enzyme catalyses N-terminal N-formyl-L-methionyl-[peptide] + H2O = N-terminal L-methionyl-[peptide] + formate. Functionally, removes the formyl group from the N-terminal Met of newly synthesized proteins. Requires at least a dipeptide for an efficient rate of reaction. N-terminal L-methionine is a prerequisite for activity but the enzyme has broad specificity at other positions. This Mycobacterium bovis (strain ATCC BAA-935 / AF2122/97) protein is Peptide deformylase.